Reading from the N-terminus, the 288-residue chain is 2-hydroxy-6-oxononadienedioate/2-hydroxy-6-oxononatrienedioate hydrolase (288 aa).

In terms of domain architecture, AB hydrolase-1 spans 39–274 (LVLLHGSGPG…RCGHWAQWEH (236 aa)). Catalysis depends on histidine 268, which acts as the Proton acceptor.

The protein belongs to the AB hydrolase superfamily. MhpC family. In terms of assembly, homodimer.

It carries out the reaction (2Z,4E)-2-hydroxy-6-oxonona-2,4-dienedioate + H2O = (2Z)-2-hydroxypenta-2,4-dienoate + succinate + H(+). It catalyses the reaction (2Z,4E,7E)-2-hydroxy-6-oxonona-2,4,7-trienedioate + H2O = (2Z)-2-hydroxypenta-2,4-dienoate + fumarate + H(+). It functions in the pathway aromatic compound metabolism; 3-phenylpropanoate degradation. Catalyzes the cleavage of the C5-C6 bond of 2-hydroxy-6-oxononadienedioate and 2-hydroxy-6-oxononatrienedioate, a dienol ring fission product of the bacterial meta-cleavage pathway for degradation of phenylpropionic acid. The polypeptide is 2-hydroxy-6-oxononadienedioate/2-hydroxy-6-oxononatrienedioate hydrolase (Paraburkholderia phymatum (strain DSM 17167 / CIP 108236 / LMG 21445 / STM815) (Burkholderia phymatum)).